The primary structure comprises 301 residues: MTWKTQLPTARGKLLIDEALAPFTWFRVGGPADVVFLPADEQDLSDFLKGLDPSVPVMAIGVGSNLLVRDGGVDGVVIRLGKGFNGVEALGDNRIKAGSAVPDAILARKAAEAGIAGLEFYVGVPGTIGGAVIMNAGCYGAETVNVVKSVRVMNRAGVVRELSVEDLHYTYRHSALQDGEPVIVLDAIFEGTPDEPEAIKARMAEITARRETTQPIREKTGGSTFKNPPGHSSWKLVDEAGWRGKPYGGAMFSPLHSNFLINTGEATAADLEGLGEAVRADVLAKTGVQLDWEIKRIGRAG.

The FAD-binding PCMH-type domain occupies 27–194 (RVGGPADVVF…LDAIFEGTPD (168 aa)). Arg-172 is an active-site residue. Ser-223 functions as the Proton donor in the catalytic mechanism. The active site involves Glu-293.

It belongs to the MurB family. Requires FAD as cofactor.

The protein localises to the cytoplasm. The catalysed reaction is UDP-N-acetyl-alpha-D-muramate + NADP(+) = UDP-N-acetyl-3-O-(1-carboxyvinyl)-alpha-D-glucosamine + NADPH + H(+). Its pathway is cell wall biogenesis; peptidoglycan biosynthesis. Cell wall formation. This chain is UDP-N-acetylenolpyruvoylglucosamine reductase, found in Caulobacter vibrioides (strain NA1000 / CB15N) (Caulobacter crescentus).